We begin with the raw amino-acid sequence, 146 residues long: NADH-ubiquinone oxidoreductase chain 6 (146 aa).

The next 4 membrane-spanning stretches (helical) occupy residues 10–30 (LTAI…ILFV), 41–61 (FVLM…MLFL), 75–95 (GTIT…LDIT), and 124–144 (AMLL…AMSI).

It belongs to the complex I subunit 6 family.

The protein localises to the mitochondrion membrane. The enzyme catalyses a ubiquinone + NADH + 5 H(+)(in) = a ubiquinol + NAD(+) + 4 H(+)(out). Functionally, core subunit of the mitochondrial membrane respiratory chain NADH dehydrogenase (Complex I) that is believed to belong to the minimal assembly required for catalysis. Complex I functions in the transfer of electrons from NADH to the respiratory chain. The immediate electron acceptor for the enzyme is believed to be ubiquinone. The polypeptide is NADH-ubiquinone oxidoreductase chain 6 (ND6) (Debaryomyces hansenii (strain ATCC 36239 / CBS 767 / BCRC 21394 / JCM 1990 / NBRC 0083 / IGC 2968) (Yeast)).